We begin with the raw amino-acid sequence, 113 residues long: Iron-sulfur cluster insertion protein ErpA (113 aa).

Iron-sulfur cluster contacts are provided by cysteine 41, cysteine 105, and cysteine 107.

This sequence belongs to the HesB/IscA family. In terms of assembly, homodimer. Iron-sulfur cluster serves as cofactor.

Functionally, required for insertion of 4Fe-4S clusters for at least IspG. This is Iron-sulfur cluster insertion protein ErpA from Vibrio parahaemolyticus serotype O3:K6 (strain RIMD 2210633).